The sequence spans 1219 residues: Pleckstrin homology domain-containing family G member 3 (1219 aa).

Residues 1 to 10 (MPVSTSLHQD) show a composition bias toward polar residues. The segment at 1–66 (MPVSTSLHQD…HLPNSNNNSS (66 aa)) is disordered. Positions 18–46 (SLTSTTSSSGSSCDSRSAMEEPSSSEAPA) are enriched in low complexity. Phosphoserine is present on Ser76. One can recognise a DH domain in the interval 93 to 272 (YLGRVVREIV…TCVAWYINDM (180 aa)). The PH domain maps to 296 to 394 (DLTTYGELVL…WTHHIKRLIL (99 aa)). Positions 431 to 442 (WSSQDEVSTNVR) are enriched in polar residues. 2 disordered regions span residues 431–599 (WSSQ…PSVL) and 613–708 (FSRR…KESA). A Phosphoserine modification is found at Ser433. Positions 446–463 (RQSEPTKHLLRQLNEKAR) are enriched in basic and acidic residues. Phosphoserine occurs at positions 576, 577, 618, 631, 640, 643, and 647. The span at 630 to 645 (GSPRLVSRSSSVLSLE) shows a compositional bias: low complexity. Residues 696 to 708 (EPDRSSCKKKESA) are compositionally biased toward basic and acidic residues. Phosphoserine occurs at positions 741, 779, and 827. 5 disordered regions span residues 756–780 (RFNS…VGSR), 821–840 (MESS…ANGF), 859–878 (EESA…RSPA), 955–1133 (APER…LYVT), and 1146–1207 (VMEK…RVRN). The segment covering 826–836 (GSPGKGPGQGQ) has biased composition (gly residues). Residues 859-873 (EESATASPESSSPTE) show a composition bias toward low complexity. 5 positions are modified to phosphoserine: Ser962, Ser1011, Ser1023, Ser1037, and Ser1040. The span at 1020 to 1029 (SAVSQRTTSP) shows a compositional bias: polar residues. A compositionally biased stretch (basic and acidic residues) spans 1049 to 1065 (DVRELCSKYASRDEARR). Phosphoserine is present on Ser1081. Omega-N-methylarginine is present on Arg1107. Over residues 1187-1197 (QPKEEGSRDPA) the composition is skewed to basic and acidic residues.

Its subcellular location is the cytoplasm. It localises to the cytoskeleton. Its function is as follows. Plays a role in controlling cell polarity and cell motility by selectively binding newly polymerized actin and activating RAC1 and CDC42 to enhance local actin polymerization. This chain is Pleckstrin homology domain-containing family G member 3, found in Homo sapiens (Human).